A 615-amino-acid chain; its full sequence is Dihydroxy-acid dehydratase (615 aa).

Residue Asp81 participates in Mg(2+) binding. Cys122 is a [2Fe-2S] cluster binding site. Mg(2+) contacts are provided by Asp123 and Lys124. Lys124 is subject to N6-carboxylysine. Cys193 is a binding site for [2Fe-2S] cluster. Glu489 is a Mg(2+) binding site. The Proton acceptor role is filled by Ser515.

It belongs to the IlvD/Edd family. As to quaternary structure, homodimer. Requires [2Fe-2S] cluster as cofactor. Mg(2+) serves as cofactor.

The catalysed reaction is (2R)-2,3-dihydroxy-3-methylbutanoate = 3-methyl-2-oxobutanoate + H2O. It catalyses the reaction (2R,3R)-2,3-dihydroxy-3-methylpentanoate = (S)-3-methyl-2-oxopentanoate + H2O. Its pathway is amino-acid biosynthesis; L-isoleucine biosynthesis; L-isoleucine from 2-oxobutanoate: step 3/4. It functions in the pathway amino-acid biosynthesis; L-valine biosynthesis; L-valine from pyruvate: step 3/4. In terms of biological role, functions in the biosynthesis of branched-chain amino acids. Catalyzes the dehydration of (2R,3R)-2,3-dihydroxy-3-methylpentanoate (2,3-dihydroxy-3-methylvalerate) into 2-oxo-3-methylpentanoate (2-oxo-3-methylvalerate) and of (2R)-2,3-dihydroxy-3-methylbutanoate (2,3-dihydroxyisovalerate) into 2-oxo-3-methylbutanoate (2-oxoisovalerate), the penultimate precursor to L-isoleucine and L-valine, respectively. The chain is Dihydroxy-acid dehydratase from Pseudomonas savastanoi pv. phaseolicola (strain 1448A / Race 6) (Pseudomonas syringae pv. phaseolicola (strain 1448A / Race 6)).